The following is a 236-amino-acid chain: MGRNSGFTFKQFHVDHDRCAMKVGTDGILLGAWAPVTNARRVLDIGSGSGLIALMLAQRSPADCRIDAVELDSNAARQARENAAASPWHERVTVIESAIQTYQATPYDLIVSNPPYFVAGQSFRDPARALARHTGGLDSRDLLAACDRLLAPNGEVALVVPTAMADEILCISADYDLHAVCYTAVITRAGKEANRVLLRLGRGLNKCEQGEIVIHSADGTYSDRYIQLTSPFYLKM.

Belongs to the methyltransferase superfamily. tRNA (adenine-N(6)-)-methyltransferase family.

Its subcellular location is the cytoplasm. It carries out the reaction adenosine(37) in tRNA1(Val) + S-adenosyl-L-methionine = N(6)-methyladenosine(37) in tRNA1(Val) + S-adenosyl-L-homocysteine + H(+). Its function is as follows. Specifically methylates the adenine in position 37 of tRNA(1)(Val) (anticodon cmo5UAC). This is tRNA1(Val) (adenine(37)-N6)-methyltransferase from Aeromonas hydrophila subsp. hydrophila (strain ATCC 7966 / DSM 30187 / BCRC 13018 / CCUG 14551 / JCM 1027 / KCTC 2358 / NCIMB 9240 / NCTC 8049).